Here is a 131-residue protein sequence, read N- to C-terminus: Small ribosomal subunit protein bS6 (131 aa).

A disordered region spans residues 96–131 (VTEASPMVKAKDERRERRDDFANETADDAEAGDSEE). Residues 104-116 (KAKDERRERRDDF) show a composition bias toward basic and acidic residues. Positions 120 to 131 (TADDAEAGDSEE) are enriched in acidic residues.

It belongs to the bacterial ribosomal protein bS6 family.

In terms of biological role, binds together with bS18 to 16S ribosomal RNA. The polypeptide is Small ribosomal subunit protein bS6 (Salmonella arizonae (strain ATCC BAA-731 / CDC346-86 / RSK2980)).